We begin with the raw amino-acid sequence, 256 residues long: Imidazole glycerol phosphate synthase subunit HisF (256 aa).

Catalysis depends on residues aspartate 12 and aspartate 131.

It belongs to the HisA/HisF family. In terms of assembly, heterodimer of HisH and HisF.

The protein localises to the cytoplasm. It catalyses the reaction 5-[(5-phospho-1-deoxy-D-ribulos-1-ylimino)methylamino]-1-(5-phospho-beta-D-ribosyl)imidazole-4-carboxamide + L-glutamine = D-erythro-1-(imidazol-4-yl)glycerol 3-phosphate + 5-amino-1-(5-phospho-beta-D-ribosyl)imidazole-4-carboxamide + L-glutamate + H(+). Its pathway is amino-acid biosynthesis; L-histidine biosynthesis; L-histidine from 5-phospho-alpha-D-ribose 1-diphosphate: step 5/9. In terms of biological role, IGPS catalyzes the conversion of PRFAR and glutamine to IGP, AICAR and glutamate. The HisF subunit catalyzes the cyclization activity that produces IGP and AICAR from PRFAR using the ammonia provided by the HisH subunit. The sequence is that of Imidazole glycerol phosphate synthase subunit HisF from Bifidobacterium adolescentis (strain ATCC 15703 / DSM 20083 / NCTC 11814 / E194a).